A 462-amino-acid polypeptide reads, in one-letter code: Tubulin gamma-1 chain (462 aa).

142 to 148 (AGGTGSG) provides a ligand contact to GTP.

It belongs to the tubulin family.

The protein resides in the cytoplasm. It is found in the cytoskeleton. Its subcellular location is the microtubule organizing center. The protein localises to the centrosome. In terms of biological role, tubulin is the major constituent of microtubules. The gamma chain is found at microtubule organizing centers (MTOC) such as the spindle poles or the centrosome, suggesting that it is involved in the minus-end nucleation of microtubule assembly. The sequence is that of Tubulin gamma-1 chain from Euplotes crassus.